Consider the following 160-residue polypeptide: Cyanate hydratase (160 aa).

Active-site residues include arginine 100, glutamate 103, and serine 126.

This sequence belongs to the cyanase family.

The enzyme catalyses cyanate + hydrogencarbonate + 3 H(+) = NH4(+) + 2 CO2. Functionally, catalyzes the reaction of cyanate with bicarbonate to produce ammonia and carbon dioxide. This Aspergillus flavus (strain ATCC 200026 / FGSC A1120 / IAM 13836 / NRRL 3357 / JCM 12722 / SRRC 167) protein is Cyanate hydratase.